Reading from the N-terminus, the 290-residue chain is Shikimate dehydrogenase (NADP(+)) (290 aa).

Shikimate is bound by residues 19–21 (SLS) and Ser-65. Lys-69 acts as the Proton acceptor in catalysis. Residues Asn-90 and Asp-105 each coordinate shikimate. Residues 129 to 133 (GAGGA) and Leu-231 each bind NADP(+). Shikimate is bound at residue Tyr-233. Gly-254 contributes to the NADP(+) binding site.

It belongs to the shikimate dehydrogenase family. In terms of assembly, homodimer.

It carries out the reaction shikimate + NADP(+) = 3-dehydroshikimate + NADPH + H(+). The protein operates within metabolic intermediate biosynthesis; chorismate biosynthesis; chorismate from D-erythrose 4-phosphate and phosphoenolpyruvate: step 4/7. In terms of biological role, involved in the biosynthesis of the chorismate, which leads to the biosynthesis of aromatic amino acids. Catalyzes the reversible NADPH linked reduction of 3-dehydroshikimate (DHSA) to yield shikimate (SA). The sequence is that of Shikimate dehydrogenase (NADP(+)) from Latilactobacillus sakei subsp. sakei (strain 23K) (Lactobacillus sakei subsp. sakei).